Consider the following 89-residue polypeptide: Small ribosomal subunit protein uS14 (89 aa).

The protein belongs to the universal ribosomal protein uS14 family. As to quaternary structure, part of the 30S ribosomal subunit. Contacts proteins S3 and S10.

In terms of biological role, binds 16S rRNA, required for the assembly of 30S particles and may also be responsible for determining the conformation of the 16S rRNA at the A site. This Pelodictyon phaeoclathratiforme (strain DSM 5477 / BU-1) protein is Small ribosomal subunit protein uS14.